Reading from the N-terminus, the 395-residue chain is Acid ceramidase (395 aa).

Residues Met1–Ala21 form the signal peptide. Residues Cys31 and Cys340 are joined by a disulfide bond. Cys143 functions as the Nucleophile in the catalytic mechanism. 4 N-linked (GlcNAc...) asparagine glycosylation sites follow: Asn173, Asn259, Asn342, and Asn348. The cysteines at positions 388 and 392 are disulfide-linked.

This sequence belongs to the acid ceramidase family. Heterodimer; disulfide-linked. The heterodimer is composed of the disulfide-linked alpha and beta chains produced by autocatalytic cleavage of the precursor. Post-translationally, N-glycosylated. In terms of processing, proteolytically cleaved into two chains alpha and beta that remain associated via a disulfide bond. Cleavage gives rise to a conformation change that activates the enzyme. The same catalytic Cys residue mediates the autoproteolytic cleavage and subsequent hydrolysis of lipid substrates. The beta chain may undergo an additional C-terminal processing.

The protein localises to the lysosome. The protein resides in the secreted. It catalyses the reaction an N-acylsphing-4-enine + H2O = sphing-4-enine + a fatty acid. The enzyme catalyses N-dodecanoylsphing-4-enine + H2O = dodecanoate + sphing-4-enine. It carries out the reaction N-tetradecanoylsphing-4-enine + H2O = tetradecanoate + sphing-4-enine. The catalysed reaction is N-hexadecanoylsphing-4-enine + H2O = sphing-4-enine + hexadecanoate. It catalyses the reaction N-octadecanoylsphing-4-enine + H2O = sphing-4-enine + octadecanoate. The enzyme catalyses N-dodecanoyl-(4R)-hydroxysphinganine + H2O = (4R)-hydroxysphinganine + dodecanoate. It carries out the reaction N-(dodecanoyl)-sphinganine + H2O = dodecanoate + sphinganine. The catalysed reaction is N-(acetyl)-sphing-4-enine + H2O = sphing-4-enine + acetate. It catalyses the reaction N-(hexanoyl)sphing-4-enine + H2O = hexanoate + sphing-4-enine. The enzyme catalyses N-octanoylsphing-4-enine + H2O = octanoate + sphing-4-enine. It carries out the reaction N-(9Z-octadecenoyl)-sphing-4-enine + H2O = sphing-4-enine + (9Z)-octadecenoate. The catalysed reaction is N-dodecanoylethanolamine + H2O = dodecanoate + ethanolamine. Its pathway is lipid metabolism; sphingolipid metabolism. Functionally, lysosomal ceramidase that hydrolyzes sphingolipid ceramides into sphingosine and free fatty acids at acidic pH. Ceramides, sphingosine, and its phosphorylated form sphingosine-1-phosphate are bioactive lipids that mediate cellular signaling pathways regulating several biological processes including cell proliferation, apoptosis and differentiation. Has a higher catalytic efficiency towards C12-ceramides versus other ceramides. Also catalyzes the reverse reaction allowing the synthesis of ceramides from fatty acids and sphingosine. For the reverse synthetic reaction, the natural sphingosine D-erythro isomer is more efficiently utilized as a substrate compared to D-erythro-dihydrosphingosine and D-erythro-phytosphingosine, while the fatty acids with chain lengths of 12 or 14 carbons are the most efficiently used. Also has an N-acylethanolamine hydrolase activity. By regulating the levels of ceramides, sphingosine and sphingosine-1-phosphate in the epidermis, mediates the calcium-induced differentiation of epidermal keratinocytes. Also indirectly regulates tumor necrosis factor/TNF-induced apoptosis. By regulating the intracellular balance between ceramides and sphingosine, in adrenocortical cells, probably also acts as a regulator of steroidogenesis. This Balaenoptera acutorostrata scammoni (North Pacific minke whale) protein is Acid ceramidase.